The sequence spans 428 residues: 3-phosphoshikimate 1-carboxyvinyltransferase (428 aa).

The 3-phosphoshikimate site is built by K22, S23, and R27. Residue K22 participates in phosphoenolpyruvate binding. G96 and R124 together coordinate phosphoenolpyruvate. 3-phosphoshikimate-binding residues include S170, S171, Q172, S198, D314, N337, and K341. Q172 is a phosphoenolpyruvate binding site. Residue D314 is the Proton acceptor of the active site. Residues R345, R387, and K412 each contribute to the phosphoenolpyruvate site.

The protein belongs to the EPSP synthase family. As to quaternary structure, monomer.

It is found in the cytoplasm. The catalysed reaction is 3-phosphoshikimate + phosphoenolpyruvate = 5-O-(1-carboxyvinyl)-3-phosphoshikimate + phosphate. Its pathway is metabolic intermediate biosynthesis; chorismate biosynthesis; chorismate from D-erythrose 4-phosphate and phosphoenolpyruvate: step 6/7. Its function is as follows. Catalyzes the transfer of the enolpyruvyl moiety of phosphoenolpyruvate (PEP) to the 5-hydroxyl of shikimate-3-phosphate (S3P) to produce enolpyruvyl shikimate-3-phosphate and inorganic phosphate. The protein is 3-phosphoshikimate 1-carboxyvinyltransferase of Shewanella amazonensis (strain ATCC BAA-1098 / SB2B).